We begin with the raw amino-acid sequence, 135 residues long: Fatty acid-binding protein 5 (135 aa).

Residue Ala-2 is modified to N-acetylalanine. Residue Lys-17 is modified to N6-acetyllysine. Residues 24–34 carry the Nuclear localization signal motif; that stretch reads KELGVGIALRK. N-eicosanoyl ethanolamine is bound by residues Cys-43 and Arg-109. Cys-120 and Cys-127 are disulfide-bonded. 129-131 contacts (9Z,12Z)-octadecadienoate; that stretch reads RIY. Tyr-131 is a binding site for N-eicosanoyl ethanolamine. Hexadecanoate is bound at residue Tyr-131. A Phosphotyrosine modification is found at Tyr-131.

This sequence belongs to the calycin superfamily. Fatty-acid binding protein (FABP) family. Monomer. Homodimer. In terms of tissue distribution, keratinocytes; highly expressed in psoriatic skin. Expressed in brain gray matter.

It localises to the cytoplasm. The protein resides in the nucleus. It is found in the synapse. The protein localises to the postsynaptic density. Its subcellular location is the secreted. It carries out the reaction hexadecanoate(out) = hexadecanoate(in). The catalysed reaction is (9Z,12Z)-octadecadienoate(out) = (9Z,12Z)-octadecadienoate(in). It catalyses the reaction (9Z)-octadecenoate(out) = (9Z)-octadecenoate(in). Functionally, intracellular carrier for long-chain fatty acids and related active lipids, such as endocannabinoids, that regulate the metabolism and actions of the ligands they bind. In addition to the cytosolic transport, selectively delivers specific fatty acids from the cytosol to the nucleus, wherein they activate nuclear receptors. Delivers retinoic acid to the nuclear receptor peroxisome proliferator-activated receptor delta; which promotes proliferation and survival. May also serve as a synaptic carrier of endocannabinoid at central synapses and thus controls retrograde endocannabinoid signaling. Modulates inflammation by regulating PTGES induction via NF-kappa-B activation, and prostaglandin E2 (PGE2) biosynthesis during inflammation. May be involved in keratinocyte differentiation. In Homo sapiens (Human), this protein is Fatty acid-binding protein 5.